Here is a 91-residue protein sequence, read N- to C-terminus: Molybdopterin synthase sulfur carrier subunit (91 aa).

Residue G91 is modified to 1-thioglycine; alternate. G91 carries the post-translational modification Glycyl adenylate; alternate.

Belongs to the MoaD family. MOCS2A subfamily. As to quaternary structure, heterotetramer; composed of 2 small (MOCS2A) and 2 large (MOCS2B) subunits. Post-translationally, C-terminal thiocarboxylation occurs in 2 steps, it is first acyl-adenylated (-COAMP) via the hesA/moeB/thiF part of MOCS3, then thiocarboxylated (-COSH) via the rhodanese domain of MOCS3.

It is found in the cytoplasm. The protein operates within cofactor biosynthesis; molybdopterin biosynthesis. Functionally, acts as a sulfur carrier required for molybdopterin biosynthesis. Component of the molybdopterin synthase complex that catalyzes the conversion of precursor Z into molybdopterin by mediating the incorporation of 2 sulfur atoms into precursor Z to generate a dithiolene group. In the complex, serves as sulfur donor by being thiocarboxylated (-COSH) at its C-terminus by MOCS3. After interaction with MOCS2B, the sulfur is then transferred to precursor Z to form molybdopterin. This Anopheles gambiae (African malaria mosquito) protein is Molybdopterin synthase sulfur carrier subunit.